Here is a 311-residue protein sequence, read N- to C-terminus: Glutaminase (311 aa).

Substrate-binding residues include Ser66, Asn116, Glu162, Asn169, Tyr193, Tyr245, and Val263.

Belongs to the glutaminase family. Homotetramer.

The enzyme catalyses L-glutamine + H2O = L-glutamate + NH4(+). This Rhodopseudomonas palustris (strain BisB5) protein is Glutaminase.